We begin with the raw amino-acid sequence, 410 residues long: Peptidase T (410 aa).

His79 contributes to the Zn(2+) binding site. Residue Asp81 is part of the active site. Residue Asp142 coordinates Zn(2+). Residue Glu176 is the Proton acceptor of the active site. The Zn(2+) site is built by Glu177, Asp199, and His381.

The protein belongs to the peptidase M20B family. Requires Zn(2+) as cofactor.

Its subcellular location is the cytoplasm. It catalyses the reaction Release of the N-terminal residue from a tripeptide.. Cleaves the N-terminal amino acid of tripeptides. The chain is Peptidase T from Listeria innocua serovar 6a (strain ATCC BAA-680 / CLIP 11262).